The primary structure comprises 276 residues: U6 snRNA phosphodiesterase 1 (276 aa).

Residues 1-58 (MIVNYSSSSSEEESGSSSSPSGKRQKLDTETSEALDHGSAQRKVCKSSHLTPRLPLPE) form a disordered region. His-131 functions as the Proton acceptor in the catalytic mechanism. AMP contacts are provided by residues 131–133 (HLS), Tyr-213, and 215–221 (DPSFHIS). UMP-binding positions include Tyr-213 and 217-221 (SFHIS). Residue His-219 is the Proton donor of the active site.

The protein belongs to the 2H phosphoesterase superfamily. USB1 family.

The protein resides in the nucleus. The catalysed reaction is a 3'-end uridylyl-uridine-RNA = a 3'-end 2',3'-cyclophospho-uridine-RNA + uridine. It catalyses the reaction a 3'-end uridylyl-adenosine-RNA = a 3'-end 2',3'-cyclophospho-uridine-RNA + adenosine. In terms of biological role, 3'-5' RNA exonuclease that trims the 3' end of oligo(U) and oligo(A) tracts of the pre-U6 small nuclear RNA (snRNA) molecule, leading to the formation of a mature U6 snRNA 3' end-terminated with a 2',3'-cyclic phosphate. Participates in the U6 snRNA 3' end processing that prevents U6 snRNA degradation. In addition also removes uridines from the 3' end of U6atac snRNA and possibly the vault RNA VTRNA1-1. The polypeptide is U6 snRNA phosphodiesterase 1 (Danio rerio (Zebrafish)).